Here is a 363-residue protein sequence, read N- to C-terminus: 3-dehydroquinate synthase (363 aa).

NAD(+) contacts are provided by residues 109 to 113 (GASTD), 133 to 134 (TT), K146, and K155. 3 residues coordinate Zn(2+): E188, H251, and H267.

It belongs to the sugar phosphate cyclases superfamily. Dehydroquinate synthase family. The cofactor is NAD(+). Co(2+) serves as cofactor. Requires Zn(2+) as cofactor.

It is found in the cytoplasm. It catalyses the reaction 7-phospho-2-dehydro-3-deoxy-D-arabino-heptonate = 3-dehydroquinate + phosphate. It functions in the pathway metabolic intermediate biosynthesis; chorismate biosynthesis; chorismate from D-erythrose 4-phosphate and phosphoenolpyruvate: step 2/7. Its function is as follows. Catalyzes the conversion of 3-deoxy-D-arabino-heptulosonate 7-phosphate (DAHP) to dehydroquinate (DHQ). In Streptomyces coelicolor (strain ATCC BAA-471 / A3(2) / M145), this protein is 3-dehydroquinate synthase.